A 358-amino-acid polypeptide reads, in one-letter code: NADH-quinone oxidoreductase subunit H (358 aa).

Transmembrane regions (helical) follow at residues L29 to W49, G95 to I115, L130 to A150, F176 to V196, G206 to I226, G258 to M280, G297 to A317, and I334 to W354.

The protein belongs to the complex I subunit 1 family. In terms of assembly, NDH-1 is composed of 14 different subunits. Subunits NuoA, H, J, K, L, M, N constitute the membrane sector of the complex.

The protein localises to the cell inner membrane. It catalyses the reaction a quinone + NADH + 5 H(+)(in) = a quinol + NAD(+) + 4 H(+)(out). In terms of biological role, NDH-1 shuttles electrons from NADH, via FMN and iron-sulfur (Fe-S) centers, to quinones in the respiratory chain. The immediate electron acceptor for the enzyme in this species is believed to be ubiquinone. Couples the redox reaction to proton translocation (for every two electrons transferred, four hydrogen ions are translocated across the cytoplasmic membrane), and thus conserves the redox energy in a proton gradient. This subunit may bind ubiquinone. This chain is NADH-quinone oxidoreductase subunit H, found in Acidovorax sp. (strain JS42).